Consider the following 192-residue polypeptide: Xanthine phosphoribosyltransferase (192 aa).

The xanthine site is built by leucine 20 and asparagine 27. 128-132 (ADGEA) is a binding site for 5-phospho-alpha-D-ribose 1-diphosphate. Residue lysine 156 coordinates xanthine.

This sequence belongs to the purine/pyrimidine phosphoribosyltransferase family. Xpt subfamily. In terms of assembly, homodimer.

The protein resides in the cytoplasm. It carries out the reaction XMP + diphosphate = xanthine + 5-phospho-alpha-D-ribose 1-diphosphate. It functions in the pathway purine metabolism; XMP biosynthesis via salvage pathway; XMP from xanthine: step 1/1. In terms of biological role, converts the preformed base xanthine, a product of nucleic acid breakdown, to xanthosine 5'-monophosphate (XMP), so it can be reused for RNA or DNA synthesis. This chain is Xanthine phosphoribosyltransferase, found in Agathobacter rectalis (strain ATCC 33656 / DSM 3377 / JCM 17463 / KCTC 5835 / VPI 0990) (Eubacterium rectale).